The chain runs to 354 residues: Cysteine proteinase 1 (354 aa).

The N-terminal stretch at 1 to 24 (MARRNPLLFAIVVTILFVVCYGSA) is a signal peptide. Positions 25–125 (LIAQTPPPVD…HKEDVHVDDS (101 aa)) are cleaved as a propeptide — activation peptide. 3 disulfide bridges follow: Cys-150–Cys-191, Cys-184–Cys-229, and Cys-282–Cys-330. Cys-153 is a catalytic residue. N-linked (GlcNAc...) asparagine glycosylation is present at Asn-208. Catalysis depends on residues His-289 and Asn-309.

This sequence belongs to the peptidase C1 family.

The cysteine proteinases have a potential role in host-parasite interaction and virulence. This Leishmania pifanoi protein is Cysteine proteinase 1 (CYS1).